Reading from the N-terminus, the 444-residue chain is Lycopaoctaene synthase (444 aa).

2 residues coordinate NADP(+): R48 and R73. Mg(2+)-binding residues include D76, E79, and D80. NADP(+) is bound by residues R215, K315, and R317. Transmembrane regions (helical) follow at residues 391–411 and 415–435; these read TAMV…AYVY and GTSL…IGLF.

It belongs to the phytoene/squalene synthase family. Requires Mg(2+) as cofactor.

It is found in the membrane. The catalysed reaction is 2 (2E,6E)-farnesyl diphosphate + NADH + H(+) = squalene + 2 diphosphate + NAD(+). The enzyme catalyses 2 (2E,6E)-farnesyl diphosphate + NADPH + H(+) = squalene + 2 diphosphate + NADP(+). It catalyses the reaction 2 (2E,6E,10E)-geranylgeranyl diphosphate + NADPH + H(+) = all-trans-lycopaoctaene + 2 diphosphate + NADP(+). In terms of biological role, converts the C20 geranylgeranyl diphosphate (GGPP) to the C40 lycopaoctaene, the first committed intermediate in the production of lycopadiene. Converts farnesyl diphosphate (FPP) into squalene, a precursor for sterol biosynthesis in eukaryotes. Converts with low efficiency the C20 phytyl diphosphate (PPP) to the C40 lycopadiene in vitro. This reaction may not have biological significance in vivo. This is Lycopaoctaene synthase from Botryococcus braunii (Green alga).